Here is a 103-residue protein sequence, read N- to C-terminus: Large ribosomal subunit protein bL21 (103 aa).

The protein belongs to the bacterial ribosomal protein bL21 family. Part of the 50S ribosomal subunit. Contacts protein L20.

In terms of biological role, this protein binds to 23S rRNA in the presence of protein L20. The protein is Large ribosomal subunit protein bL21 of Saccharophagus degradans (strain 2-40 / ATCC 43961 / DSM 17024).